A 1052-amino-acid chain; its full sequence is Membrane-bound transcription factor site-1 protease (1052 aa).

An N-terminal signal peptide occupies residues 1–17 (MKLVNIWLLLLVVLLCG). The propeptide occupies 18-186 (KKHLGDRLEK…TGRHSSRRLL (169 aa)). S168 is subject to Phosphoserine; by FAM20C. Residues 187 to 998 (RAIPRQVAQT…IMPGRYNQEV (812 aa)) lie on the Lumenal side of the membrane. Residues 190-472 (PRQVAQTLQA…HGKLDLLRAY (283 aa)) enclose the Peptidase S8 domain. The Charge relay system role is filled by D218. N236 carries N-linked (GlcNAc...) asparagine glycosylation. Catalysis depends on H249, which acts as the Charge relay system. N-linked (GlcNAc...) asparagine glycosylation is present at N305. Catalysis depends on S414, which acts as the Charge relay system. N-linked (GlcNAc...) asparagine glycosylation is found at N515 and N728. Residues 877-887 (PSLSHSGNRQR) are compositionally biased toward polar residues. Residues 877–899 (PSLSHSGNRQRPPSGAGSVTPER) form a disordered region. A glycan (N-linked (GlcNAc...) asparagine) is linked at N939. A helical transmembrane segment spans residues 999-1021 (GQTIPVFAFLGAMVVLAFFVVQI). The Cytoplasmic segment spans residues 1022-1052 (NKAKSRPKRRKPRVKRPQLMQQVHPPKTPSV). The segment covering 1027 to 1037 (RPKRRKPRVKR) has biased composition (basic residues). A disordered region spans residues 1027 to 1052 (RPKRRKPRVKRPQLMQQVHPPKTPSV).

It belongs to the peptidase S8 family. Interacts with LYSET; this interaction bridges GNPTAB to MBTPS1. The cofactor is Ca(2+). In terms of processing, the 148 kDa zymogen is processed progressively into two membrane-bound 120 and 106 kDa forms in the endoplasmic reticulum, and late into a secreted 98 kDa form. The propeptide is autocatalytically removed through an intramolecular cleavage after Leu-186. Further cleavage generates 14, 10, and 8 kDa intermediates. In terms of tissue distribution, widely expressed.

The protein resides in the endoplasmic reticulum membrane. It localises to the golgi apparatus membrane. It carries out the reaction Processes precursors containing basic and hydrophobic/aliphatic residues at P4 and P2, respectively, with a relatively relaxed acceptance of amino acids at P1 and P3.. Inhibited by divalent copper and zinc ions, but not by nickel or cobalt. Inhibited by its prosegment, but not smaller fragments. Inhibited by 4-(2-aminoethyl)benzenesulfonyl fluoride (AEBSF), a serine protease inhibitor. Its function is as follows. Serine protease that cleaves after hydrophobic or small residues, provided that Arg or Lys is in position P4: known substrates include SREBF1/SREBP1, SREBF2/SREBP2, BDNF, GNPTAB, ATF6, ATF6B and FAM20C. Cleaves substrates after Arg-Ser-Val-Leu (SREBP2), Arg-His-Leu-Leu (ATF6), Arg-Gly-Leu-Thr (BDNF) and its own propeptide after Arg-Arg-Leu-Leu. Catalyzes the first step in the proteolytic activation of the sterol regulatory element-binding proteins (SREBPs) SREBF1/SREBP1 and SREBF2/SREBP2. Also mediates the first step in the proteolytic activation of the cyclic AMP-dependent transcription factor ATF-6 (ATF6 and ATF6B). Mediates the protein cleavage of GNPTAB into subunit alpha and beta, thereby participating in biogenesis of lysosomes. Cleaves the propeptide from FAM20C which is required for FAM20C secretion from the Golgi apparatus membrane and for enhancement of FAM20C kinase activity, promoting osteoblast differentiation and biomineralization. Involved in the regulation of M6P-dependent Golgi-to-lysosome trafficking of lysosomal enzymes. It is required for the activation of CREB3L2/BBF2H7, a transcriptional activator of MIA3/TANGO and other genes controlling mega vesicle formation. Therefore, it plays a key role in the regulation of mega vesicle-mediated collagen trafficking. In astrocytes and osteoblasts, upon DNA damage and ER stress, mediates the first step of the regulated intramembrane proteolytic activation of the transcription factor CREB3L1, leading to the inhibition of cell-cycle progression. The polypeptide is Membrane-bound transcription factor site-1 protease (Homo sapiens (Human)).